Consider the following 243-residue polypeptide: MPDGIVASEAKDNTNNNLVHSFLGPKFPAASESSIMWFILRCLEWTLAKLLYRRRGYDHDLFYKGLAFGKYPNPTFTVTSPDCGPTGAKLGVEYSQWGSGKVPQLTWPVSGIEVKEYLIISEDPDAPLGHSNVHGIYCFVPGNKTGFGPDDLELLGEDKNGLKQISSGYLVGKNRRNTVYIAPRPPLGHGPHRYFFEIVALSQPLDPEKLSPVPTKQELSDMIIGKVCGWGLWTATFEQKWSM.

This sequence belongs to the tstB family.

Its function is as follows. Phosphatidylethanolamine-binding protein; part of the gene cluster that mediates the biosynthesis of the antihypercholesterolemic agents phomoidrides which are dimeric anhydrides. Within the pathway, tstB is not essential for dimerization and its function has still to be determined. The pathway begins with the highly reducing polyketide synthase tstA that catalyzes the formation of a C12-fatty acyl-ACP, starting from one acetate and 5 malonate units. The hydrolase tstM is involved in the release of the C12-fatty acyl chain from phiA. The alkylcitrate synthase (ACS) tstJ and the alkylcitrate dehydratase (ACDH) tstI then give rise to decarboxylated monomeric anhydrides by coupling the C12-fatty acyl chain with oxalacetic acid. The cyclase tstC is responsible for the dimerization of the monomeric anhydrides which leads to the production of prephomoidride that contains the characteristic bicyclo[4.3.1]deca-1,6-diene system of phomoidrides. Iterative oxidation catalyzed by the alpha-ketoglutarate-dependent dioxygenase tstK produced then phomoidride A. Finally, the methyltransferase tstE converts phomoidride A to phomoidride B via an acetalization reaction. The phosphatidylethanolamine-binding protein tstB and tstN are not essential for dimerization and their functions have still to be determined. This Talaromyces stipitatus (strain ATCC 10500 / CBS 375.48 / QM 6759 / NRRL 1006) (Penicillium stipitatum) protein is Phomoidride biosynthesis cluster protein B.